Consider the following 451-residue polypeptide: ATP-dependent protease ATPase subunit HslU (451 aa).

ATP is bound by residues Ile26, 68 to 73 (GVGKTE), Asp263, Glu328, and Arg400.

It belongs to the ClpX chaperone family. HslU subfamily. As to quaternary structure, a double ring-shaped homohexamer of HslV is capped on each side by a ring-shaped HslU homohexamer. The assembly of the HslU/HslV complex is dependent on binding of ATP.

The protein resides in the cytoplasm. Its function is as follows. ATPase subunit of a proteasome-like degradation complex; this subunit has chaperone activity. The binding of ATP and its subsequent hydrolysis by HslU are essential for unfolding of protein substrates subsequently hydrolyzed by HslV. HslU recognizes the N-terminal part of its protein substrates and unfolds these before they are guided to HslV for hydrolysis. This chain is ATP-dependent protease ATPase subunit HslU, found in Dichelobacter nodosus (strain VCS1703A).